Consider the following 76-residue polypeptide: MNKALFLCLVVLCAAVVFAAEDLQKAKHAPFKRAAPCFCPGKPDRGDLWIFRGTCPGGYGYTSNCYKWPNICCYPH.

The signal sequence occupies residues 1 to 19 (MNKALFLCLVVLCAAVVFA). Positions 20-31 (AEDLQKAKHAPF) are excised as a propeptide. Disulfide bonds link Cys37-Cys72, Cys39-Cys65, and Cys55-Cys73.

It belongs to the sea anemone type 3 (BDS) potassium channel toxin family. In terms of tissue distribution, moderately expressed in the ectodermal tissue from the distal and proximal tentacles, body wall, and oral disk.

The protein resides in the secreted. It is found in the nematocyst. Functionally, blocks Kv3 voltage-gated potassium channels. Reduces blood pressure. The chain is Kappa-actitoxin-Avd4c from Anemonia viridis (Snakelocks anemone).